The sequence spans 167 residues: Small ribosomal subunit protein uS9 (167 aa).

A disordered region spans residues 1-41 (MNTEAVAPDVAEEEVLTSYTSESSASADDAPKKERPALTVS). Polar residues predominate over residues 17–26 (TSYTSESSAS).

This sequence belongs to the universal ribosomal protein uS9 family.

The protein is Small ribosomal subunit protein uS9 of Renibacterium salmoninarum (strain ATCC 33209 / DSM 20767 / JCM 11484 / NBRC 15589 / NCIMB 2235).